A 1202-amino-acid chain; its full sequence is DNA-directed RNA polymerase subunit beta (1202 aa).

It belongs to the RNA polymerase beta chain family. The RNAP catalytic core consists of 2 alpha, 1 beta, 1 beta' and 1 omega subunit. When a sigma factor is associated with the core the holoenzyme is formed, which can initiate transcription.

It carries out the reaction RNA(n) + a ribonucleoside 5'-triphosphate = RNA(n+1) + diphosphate. DNA-dependent RNA polymerase catalyzes the transcription of DNA into RNA using the four ribonucleoside triphosphates as substrates. The chain is DNA-directed RNA polymerase subunit beta from Leuconostoc mesenteroides subsp. mesenteroides (strain ATCC 8293 / DSM 20343 / BCRC 11652 / CCM 1803 / JCM 6124 / NCDO 523 / NBRC 100496 / NCIMB 8023 / NCTC 12954 / NRRL B-1118 / 37Y).